The sequence spans 104 residues: Small ribosomal subunit protein bS16 (104 aa).

It belongs to the bacterial ribosomal protein bS16 family.

This Gemmatimonas aurantiaca (strain DSM 14586 / JCM 11422 / NBRC 100505 / T-27) protein is Small ribosomal subunit protein bS16.